The chain runs to 213 residues: NADH dehydrogenase [ubiquinone] iron-sulfur protein 7, mitochondrial (213 aa).

Residues 1-31 constitute a mitochondrion transit peptide; the sequence is MALIARNAKLLTGTAPFLQRAATIHTTLPSL. Positions 30-42 are enriched in low complexity; sequence SLSQQPASSPATS. Residues 30–52 form a disordered region; that stretch reads SLSQQPASSPATSGGAQPPSMNT. [4Fe-4S] cluster is bound by residues Cys88, Cys89, Cys153, and Cys183.

The protein belongs to the complex I 20 kDa subunit family. As to quaternary structure, complex I is composed of about 45 different subunits. This is a component of the iron-sulfur (IP) fragment of the enzyme. [4Fe-4S] cluster is required as a cofactor.

Its subcellular location is the mitochondrion. The catalysed reaction is a ubiquinone + NADH + 5 H(+)(in) = a ubiquinol + NAD(+) + 4 H(+)(out). In terms of biological role, core subunit of the mitochondrial membrane respiratory chain NADH dehydrogenase (Complex I) that is believed to belong to the minimal assembly required for catalysis. Complex I functions in the transfer of electrons from NADH to the respiratory chain. The immediate electron acceptor for the enzyme is believed to be ubiquinone. This is NADH dehydrogenase [ubiquinone] iron-sulfur protein 7, mitochondrial from Solanum tuberosum (Potato).